A 421-amino-acid chain; its full sequence is Thymidine phosphorylase (421 aa).

It belongs to the thymidine/pyrimidine-nucleoside phosphorylase family. As to quaternary structure, homodimer.

The catalysed reaction is thymidine + phosphate = 2-deoxy-alpha-D-ribose 1-phosphate + thymine. Its function is as follows. The enzymes which catalyze the reversible phosphorolysis of pyrimidine nucleosides are involved in the degradation of these compounds and in their utilization as carbon and energy sources, or in the rescue of pyrimidine bases for nucleotide synthesis. This is Thymidine phosphorylase (deoA) from Mycoplasma genitalium (strain ATCC 33530 / DSM 19775 / NCTC 10195 / G37) (Mycoplasmoides genitalium).